Here is a 206-residue protein sequence, read N- to C-terminus: Large ribosomal subunit protein uL4 (206 aa).

The disordered stretch occupies residues 48-97; the sequence is THAVKNRSLVSGGGKKPWKQKHTGRARQGSTRASQWVGGGKAMGPKPRDY. The span at 63-72 shows a compositional bias: basic residues; sequence KPWKQKHTGR.

This sequence belongs to the universal ribosomal protein uL4 family. As to quaternary structure, part of the 50S ribosomal subunit.

In terms of biological role, one of the primary rRNA binding proteins, this protein initially binds near the 5'-end of the 23S rRNA. It is important during the early stages of 50S assembly. It makes multiple contacts with different domains of the 23S rRNA in the assembled 50S subunit and ribosome. Forms part of the polypeptide exit tunnel. In Anaeromyxobacter dehalogenans (strain 2CP-C), this protein is Large ribosomal subunit protein uL4.